A 343-amino-acid chain; its full sequence is Anthranilate phosphoribosyltransferase (343 aa).

Residues G78, 81–82, T86, 88–91, 106–114, and S118 each bind 5-phospho-alpha-D-ribose 1-diphosphate; these read GD, NIST, and KHGNRSVSS. Position 78 (G78) interacts with anthranilate. S90 contributes to the Mg(2+) binding site. N109 contacts anthranilate. R164 provides a ligand contact to anthranilate. Mg(2+) is bound by residues D223 and E224.

It belongs to the anthranilate phosphoribosyltransferase family. Homodimer. Mg(2+) serves as cofactor.

The enzyme catalyses N-(5-phospho-beta-D-ribosyl)anthranilate + diphosphate = 5-phospho-alpha-D-ribose 1-diphosphate + anthranilate. It participates in amino-acid biosynthesis; L-tryptophan biosynthesis; L-tryptophan from chorismate: step 2/5. Catalyzes the transfer of the phosphoribosyl group of 5-phosphorylribose-1-pyrophosphate (PRPP) to anthranilate to yield N-(5'-phosphoribosyl)-anthranilate (PRA). The sequence is that of Anthranilate phosphoribosyltransferase from Chlamydia caviae (strain ATCC VR-813 / DSM 19441 / 03DC25 / GPIC) (Chlamydophila caviae).